A 339-amino-acid polypeptide reads, in one-letter code: Cilia- and flagella-associated protein 36 (339 aa).

2 coiled-coil regions span residues 142–188 and 255–330; these read ISDL…ENKQ and NLSQ…EVIL. 2 disordered regions span residues 177–212 and 281–318; these read NLTLGEHSENKQSSGSERTPNNTELPVKTQKEEKQP and KKQESKKMAQNSEEHEEKATCSKQEMTEEEKKSLQRRK. A compositionally biased stretch (polar residues) spans 187-200; it reads KQSSGSERTPNNTE. Residues 281–313 show a composition bias toward basic and acidic residues; it reads KKQESKKMAQNSEEHEEKATCSKQEMTEEEKKS.

This sequence belongs to the CFAP36 family.

It is found in the nucleus. The protein resides in the cytoplasm. It localises to the cell projection. The protein localises to the cilium. Its subcellular location is the flagellum. The polypeptide is Cilia- and flagella-associated protein 36 (Xenopus tropicalis (Western clawed frog)).